Consider the following 834-residue polypeptide: Ras GTPase-activating protein 3 (834 aa).

2 consecutive C2 domains span residues 1-112 and 123-263; these read MAVE…DTWF and VQGK…EAWY. At Ala2 the chain carries N-acetylalanine. Phosphotyrosine is present on Tyr66. Ser77 is modified (phosphoserine). Residue Thr110 is modified to Phosphothreonine. The region spanning 346–561 is the Ras-GAP domain; that stretch reads GRVVPFISAI…DAVKNFLDLI (216 aa). In terms of domain architecture, PH spans 576-677; it reads ILLKEGFMIK…WIDILTKVSQ (102 aa). A Btk-type zinc finger spans residues 679 to 715; the sequence is NQKRLTVFHPSAYLNGHWLCCRASSDTAIGCTPCTGG. His687, Cys698, Cys699, and Cys709 together coordinate Zn(2+). Phosphoserine is present on residues Ser809 and Ser833.

Inhibitory regulator of the Ras-cyclic AMP pathway. Binds inositol tetrakisphosphate (IP4). This Rattus norvegicus (Rat) protein is Ras GTPase-activating protein 3 (Rasa3).